A 184-amino-acid polypeptide reads, in one-letter code: MLIILKENIRTLGKLGEVVKVKPGYARNFLFPQRKAVKATKENLTKLEEQRLLLEEENIKRLNVAKELALSLHDKFVVLIKQASEDGKIFGSVTTREIAKILLQEGHVIDHRSLSFGGVSIKNLGEYQVNVELHSEVVVPITIYVVKSETDANELRQVKLQNQKSEQQEAEQDANKEATDGDDS.

The interval 160-184 is disordered; it reads LQNQKSEQQEAEQDANKEATDGDDS. Residues 173–184 show a composition bias toward basic and acidic residues; sequence DANKEATDGDDS.

This sequence belongs to the bacterial ribosomal protein bL9 family.

Functionally, binds to the 23S rRNA. This chain is Large ribosomal subunit protein bL9, found in Wolbachia pipientis wMel.